The following is a 341-amino-acid chain: Large ribosomal subunit protein uL29m (341 aa).

Positions 44–74 (LARTRYTKPKPKPPRRSKVRAPTQTTHHDTD) are disordered. Positions 48–62 (RYTKPKPKPPRRSKV) are enriched in basic residues.

It belongs to the universal ribosomal protein uL29 family. Component of the mitochondrial large ribosomal subunit. Mature mitochondrial ribosomes consist of a small (37S) and a large (54S) subunit. The 37S subunit contains at least 33 different proteins and 1 molecule of RNA (15S). The 54S subunit contains at least 45 different proteins and 1 molecule of RNA (21S).

Its subcellular location is the mitochondrion. This is Large ribosomal subunit protein uL29m (MRPL4) from Eremothecium gossypii (strain ATCC 10895 / CBS 109.51 / FGSC 9923 / NRRL Y-1056) (Yeast).